Consider the following 405-residue polypeptide: Tryptophan synthase beta chain (405 aa).

Residue K95 is modified to N6-(pyridoxal phosphate)lysine.

It belongs to the TrpB family. Tetramer of two alpha and two beta chains. It depends on pyridoxal 5'-phosphate as a cofactor.

It carries out the reaction (1S,2R)-1-C-(indol-3-yl)glycerol 3-phosphate + L-serine = D-glyceraldehyde 3-phosphate + L-tryptophan + H2O. It functions in the pathway amino-acid biosynthesis; L-tryptophan biosynthesis; L-tryptophan from chorismate: step 5/5. Functionally, the beta subunit is responsible for the synthesis of L-tryptophan from indole and L-serine. This is Tryptophan synthase beta chain from Pseudomonas putida (strain ATCC 47054 / DSM 6125 / CFBP 8728 / NCIMB 11950 / KT2440).